A 91-amino-acid polypeptide reads, in one-letter code: Small ribosomal subunit protein uS19m (91 aa).

It belongs to the universal ribosomal protein uS19 family. In terms of assembly, component of the mitochondrial small ribosomal subunit (mt-SSU). Mature yeast 74S mitochondrial ribosomes consist of a small (37S) and a large (54S) subunit. The 37S small subunit contains a 15S ribosomal RNA (15S mt-rRNA) and 34 different proteins. The 54S large subunit contains a 21S rRNA (21S mt-rRNA) and 46 different proteins.

It is found in the mitochondrion. In terms of biological role, component of the mitochondrial ribosome (mitoribosome), a dedicated translation machinery responsible for the synthesis of mitochondrial genome-encoded proteins, including at least some of the essential transmembrane subunits of the mitochondrial respiratory chain. The mitoribosomes are attached to the mitochondrial inner membrane and translation products are cotranslationally integrated into the membrane. In Saccharomyces cerevisiae (strain ATCC 204508 / S288c) (Baker's yeast), this protein is Small ribosomal subunit protein uS19m (RSM19).